Consider the following 332-residue polypeptide: Glycerol-3-phosphate dehydrogenase [NAD(P)+] (332 aa).

Residues Ser10, Trp11, His31, Arg32, and Lys105 each contribute to the NADPH site. Residues Lys105, Gly136, and Ser138 each coordinate sn-glycerol 3-phosphate. Ala140 is an NADPH binding site. Residues Lys191, Asp244, Ser254, Arg255, and Asn256 each coordinate sn-glycerol 3-phosphate. Lys191 serves as the catalytic Proton acceptor. Position 255 (Arg255) interacts with NADPH. Residues Val279 and Glu281 each coordinate NADPH.

It belongs to the NAD-dependent glycerol-3-phosphate dehydrogenase family.

The protein localises to the cytoplasm. It carries out the reaction sn-glycerol 3-phosphate + NAD(+) = dihydroxyacetone phosphate + NADH + H(+). The catalysed reaction is sn-glycerol 3-phosphate + NADP(+) = dihydroxyacetone phosphate + NADPH + H(+). It functions in the pathway membrane lipid metabolism; glycerophospholipid metabolism. Catalyzes the reduction of the glycolytic intermediate dihydroxyacetone phosphate (DHAP) to sn-glycerol 3-phosphate (G3P), the key precursor for phospholipid synthesis. In Prosthecochloris aestuarii (strain DSM 271 / SK 413), this protein is Glycerol-3-phosphate dehydrogenase [NAD(P)+].